The sequence spans 207 residues: Large ribosomal subunit protein uL4 (207 aa).

A disordered region spans residues 48 to 70 (KAQKTRSEVSGGGAKPWRQKGTG).

Belongs to the universal ribosomal protein uL4 family. As to quaternary structure, part of the 50S ribosomal subunit.

Functionally, one of the primary rRNA binding proteins, this protein initially binds near the 5'-end of the 23S rRNA. It is important during the early stages of 50S assembly. It makes multiple contacts with different domains of the 23S rRNA in the assembled 50S subunit and ribosome. Forms part of the polypeptide exit tunnel. This is Large ribosomal subunit protein uL4 from Francisella tularensis subsp. mediasiatica (strain FSC147).